Reading from the N-terminus, the 35-residue chain is Beta-amanitin proprotein (35 aa).

Residues M1–P10 constitute a propeptide that is removed on maturation. The segment at residues I11–P18 is a cross-link (cyclopeptide (Ile-Pro)). Positions W12–C16 form a cross-link, 2'-cysteinyl-6'-hydroxytryptophan sulfoxide (Trp-Cys). Positions C19 to C35 are excised as a propeptide.

Belongs to the MSDIN fungal toxin family. Post-translationally, processed by the macrocyclase-peptidase enzyme POPB to yield a toxic cyclic octapeptide. POPB first removes 10 residues from the N-terminus. Conformational trapping of the remaining peptide forces the enzyme to release this intermediate rather than proceed to macrocyclization. The enzyme rebinds the remaining peptide in a different conformation and catalyzes macrocyclization of the N-terminal 8 residues. Expressed in basidiocarps.

In terms of biological role, toxin belonging to the bicyclic octapeptides amatoxins that acts by binding non-competitively to RNA polymerase II and greatly slowing the elongation of transcripts from target promoters. This chain is Beta-amanitin proprotein, found in Amanita exitialis (Guangzhou destroying angel).